Reading from the N-terminus, the 368-residue chain is Cyclic di-GMP phosphodiesterase TM_0186 (368 aa).

The 113-residue stretch at 2–114 folds into the Response regulatory domain; it reads TVLIVEDDDI…LLRLKITHAL (113 aa). Position 49 is a 4-aspartylphosphate (D49). The HD-GYP domain occupies 148-345; it reads YEDFLFEVLE…ITDVYRREKD (198 aa). A divalent metal cation is bound by residues E169, H173, H205, D206, H234, H260, H261, and D289. A disordered region spans residues 341–368; it reads RREKDEDTSHNGGRSHQSSPGEGVEGIR. Polar residues predominate over residues 350 to 360; sequence HNGGRSHQSSP.

The catalysed reaction is 3',3'-c-di-GMP + 2 H2O = 2 GMP + 2 H(+). Can function in vivo with either divalent iron or manganese occupying di- and trimetal sites. Dimetal is necessary and sufficient to catalyze conversion of c-di-GMP to pGpG, but conversion of pGpG to GMP requires an occupied trimetal site. Functionally, phosphodiesterase (PDE) that catalyzes the hydrolysis of cyclic diguanylate (c-di-GMP) to GMP. Hydrolyzes c-di-GMP to GMP in a two-step reaction, via the linear intermediate 5'-phosphoguanylyl(3'-&gt;5')guanosine (pGpG). The sequence is that of Cyclic di-GMP phosphodiesterase TM_0186 from Thermotoga maritima (strain ATCC 43589 / DSM 3109 / JCM 10099 / NBRC 100826 / MSB8).